Consider the following 1040-residue polypeptide: Multidrug resistance protein MdtB (1040 aa).

12 helical membrane passes run 16–36, 347–367, 369–389, 396–416, 440–460, 472–492, 537–557, 863–883, 888–908, 911–931, 968–988, and 998–1018; these read FIMRPVATTLLMVAILLAGII, LMMAIALVVMIIYLFLRNIPA, IIPGVAVPLSLIGTFAVMVFL, LTLMALTIATGFVVDDAIVVI, IGFTIISLTFSLIAVLIPLLF, FAITLAVAILISAVVSLTLTP, WLTLSVALSTLLLSVLLWVFI, LGSTVWLIVAAVVAMYIVLGI, FIHPITILSTLPTAGVGALLA, IAGSELDVIAIIGIILLIGIV, ILMTTLAALLGALPLMLSTGV, and IGMVGGLIVSQVLTLFTTPVI.

This sequence belongs to the resistance-nodulation-cell division (RND) (TC 2.A.6) family. MdtB subfamily. Part of a tripartite efflux system composed of MdtA, MdtB and MdtC. MdtB forms a heteromultimer with MdtC.

The protein resides in the cell inner membrane. Its function is as follows. The MdtABC tripartite complex confers resistance against novobiocin and deoxycholate. This Escherichia coli (strain SE11) protein is Multidrug resistance protein MdtB.